The chain runs to 93 residues: Co-chaperonin GroES (93 aa).

The protein belongs to the GroES chaperonin family. In terms of assembly, heptamer of 7 subunits arranged in a ring. Interacts with the chaperonin GroEL.

The protein resides in the cytoplasm. Its function is as follows. Together with the chaperonin GroEL, plays an essential role in assisting protein folding. The GroEL-GroES system forms a nano-cage that allows encapsulation of the non-native substrate proteins and provides a physical environment optimized to promote and accelerate protein folding. GroES binds to the apical surface of the GroEL ring, thereby capping the opening of the GroEL channel. This is Co-chaperonin GroES from Geobacillus kaustophilus (strain HTA426).